Reading from the N-terminus, the 554-residue chain is GPI alpha-1,2-mannosyltransferase 3 (554 aa).

A glycan (N-linked (GlcNAc...) asparagine) is linked at N26. 9 helical membrane passes run 63 to 83 (LLLF…TSFV), 136 to 156 (VQLL…VADV), 192 to 212 (LTNT…PLEG), 224 to 244 (LVAL…PLLF), 255 to 275 (DLIL…SLMI), 315 to 335 (GFPV…YLAP), 340 to 360 (ILLV…HKEF), 362 to 382 (FIYP…THLK), and 387 to 407 (PALS…GLVH). A glycan (N-linked (GlcNAc...) asparagine) is linked at N427.

This sequence belongs to the glycosyltransferase 22 family. PIGB subfamily.

The protein resides in the endoplasmic reticulum membrane. It participates in glycolipid biosynthesis; glycosylphosphatidylinositol-anchor biosynthesis. Alpha-1,2-mannosyltransferase that catalyzes the transfer of the third mannose, via an alpha-1,2 bond, from a dolichol-phosphate-mannose (Dol-P-Man) to an alpha-D-Man-(1-&gt;6)-2-PEtn-alpha-D-Man-(1-&gt;4)-alpha-D-GlcN-(1-&gt;6)-(1-radyl,2-acyl-sn-glycero-3-phospho)-2-acyl-inositol intermediate to generate an alpha-D-Man-(1-&gt;2)-alpha-D-Man-(1-&gt;6)-2-PEtn-alpha-D-Man-(1-&gt;4)-alpha-D-GlcN-(1-&gt;6)-(1-radyl,2-acyl-sn-glycero-3-phospho)-2-acyl-inositol (also termed H6) and participates in the nineth step of the glycosylphosphatidylinositol-anchor biosynthesis. May also add the third mannose to an alpha-D-Man-(1-&gt;6)-alpha-D-Man-(1-&gt;4)-alpha-D-GlcN-(1-&gt;6)-(1-radyl,2-acyl-sn-glycero-3-phospho)-2-acyl-inositol (also termed H3) intermediate generating an alpha-D-Man-(1-&gt;2)-alpha-D-Man-(1-&gt;6)-alpha-D-Man-(1-&gt;4)-alpha-D-GlcN-(1-&gt;6)-(1-radyl,2-acyl-sn-glycero-3-phospho)-2-acyl-inositol (also termed H4). This is GPI alpha-1,2-mannosyltransferase 3 from Homo sapiens (Human).